The primary structure comprises 931 residues: Bifunctional uridylyltransferase/uridylyl-removing enzyme (931 aa).

A uridylyltransferase region spans residues 1 to 383 (MDLATTNDAA…RPGTELRRVP (383 aa)). The uridylyl-removing stretch occupies residues 384-739 (EGDDFIIDNN…VGFDEARGVT (356 aa)). In terms of domain architecture, HD spans 499 to 622 (VDEHLLRCIG…VQSVEQMKLL (124 aa)). ACT domains follow at residues 740–822 (ELTI…VVAR) and 851–931 (VIEV…QSVG).

Belongs to the GlnD family. Mg(2+) is required as a cofactor.

It carries out the reaction [protein-PII]-L-tyrosine + UTP = [protein-PII]-uridylyl-L-tyrosine + diphosphate. It catalyses the reaction [protein-PII]-uridylyl-L-tyrosine + H2O = [protein-PII]-L-tyrosine + UMP + H(+). Uridylyltransferase (UTase) activity is inhibited by glutamine, while glutamine activates uridylyl-removing (UR) activity. In terms of biological role, modifies, by uridylylation and deuridylylation, the PII regulatory proteins (GlnB and homologs), in response to the nitrogen status of the cell that GlnD senses through the glutamine level. Under low glutamine levels, catalyzes the conversion of the PII proteins and UTP to PII-UMP and PPi, while under higher glutamine levels, GlnD hydrolyzes PII-UMP to PII and UMP (deuridylylation). Thus, controls uridylylation state and activity of the PII proteins, and plays an important role in the regulation of nitrogen assimilation and metabolism. This is Bifunctional uridylyltransferase/uridylyl-removing enzyme from Nitrobacter hamburgensis (strain DSM 10229 / NCIMB 13809 / X14).